The sequence spans 240 residues: NKG2-E type II integral membrane protein (240 aa).

Residues 1 to 12 (MSKQRGTFSEVS) are compositionally biased toward polar residues. Residues 1 to 31 (MSKQRGTFSEVSLAQDPKWQQRKPKGNKSSI) are disordered. The Cytoplasmic segment spans residues 1-70 (MSKQRGTFSE…CQGLLPPPEK (70 aa)). A helical; Signal-anchor for type II membrane protein membrane pass occupies residues 71 to 93 (LTAEVLGIICIVLMATVLKTIVL). Topologically, residues 94–240 (IPFLEQNNSS…IMLTRLVLNS (147 aa)) are extracellular. An N-linked (GlcNAc...) asparagine glycan is attached at Asn-100. The C-type lectin domain occupies 116–230 (HCPEEWITYS…GSSRIIRRGF (115 aa)). A disulfide bridge connects residues Cys-117 and Cys-128. 2 N-linked (GlcNAc...) asparagine glycosylation sites follow: Asn-149 and Asn-179. Cysteines 207 and 220 form a disulfide.

As to quaternary structure, can form disulfide-bonded heterodimer with CD94. As to expression, natural killer cells.

It is found in the membrane. Its function is as follows. Plays a role as a receptor for the recognition of MHC class I HLA-E molecules by NK cells and some cytotoxic T-cells. In Homo sapiens (Human), this protein is NKG2-E type II integral membrane protein (KLRC3).